Reading from the N-terminus, the 87-residue chain is UPF0250 protein NE1487 (87 aa).

This sequence belongs to the UPF0250 family.

The polypeptide is UPF0250 protein NE1487 (Nitrosomonas europaea (strain ATCC 19718 / CIP 103999 / KCTC 2705 / NBRC 14298)).